Here is an 87-residue protein sequence, read N- to C-terminus: U3-theraphotoxin-Hhn1i (87 aa).

Positions 1–24 are cleaved as a signal peptide; sequence MVNMEASMFLTFAGLVLLFVVCYA. Residues 25–52 constitute a propeptide that is removed on maturation; the sequence is SESEEKEFPKEMLSSIFAVDNDFKQEER. Intrachain disulfides connect Cys-54–Cys-67, Cys-61–Cys-72, and Cys-66–Cys-79.

The protein belongs to the neurotoxin 10 (Hwtx-1) family. 51 (Hntx-8) subfamily. Hntx-8 sub-subfamily. As to expression, expressed by the venom gland.

The protein resides in the secreted. Ion channel inhibitor. The sequence is that of U3-theraphotoxin-Hhn1i from Cyriopagopus hainanus (Chinese bird spider).